Here is a 357-residue protein sequence, read N- to C-terminus: Phenylalanine--tRNA ligase alpha subunit (357 aa).

Position 257 (Glu257) interacts with Mg(2+).

This sequence belongs to the class-II aminoacyl-tRNA synthetase family. Phe-tRNA synthetase alpha subunit type 1 subfamily. Tetramer of two alpha and two beta subunits. Requires Mg(2+) as cofactor.

Its subcellular location is the cytoplasm. It carries out the reaction tRNA(Phe) + L-phenylalanine + ATP = L-phenylalanyl-tRNA(Phe) + AMP + diphosphate + H(+). The protein is Phenylalanine--tRNA ligase alpha subunit of Roseobacter denitrificans (strain ATCC 33942 / OCh 114) (Erythrobacter sp. (strain OCh 114)).